We begin with the raw amino-acid sequence, 342 residues long: Dihydroorotate dehydrogenase (quinone) (342 aa).

Residues Ala60–Lys64 and Thr84 each bind FMN. Residue Lys64 coordinates substrate. A substrate-binding site is contributed by Asn109–Phe113. FMN is bound by residues Asn137 and Asn170. Asn170 is a binding site for substrate. Residue Ser173 is the Nucleophile of the active site. Asn175 contributes to the substrate binding site. FMN-binding residues include Lys215 and Thr243. Asn244–Thr245 is a binding site for substrate. Residues Gly266, Gly295, and Tyr316–Ser317 contribute to the FMN site.

Belongs to the dihydroorotate dehydrogenase family. Type 2 subfamily. As to quaternary structure, monomer. The cofactor is FMN.

It localises to the cell membrane. It catalyses the reaction (S)-dihydroorotate + a quinone = orotate + a quinol. Its pathway is pyrimidine metabolism; UMP biosynthesis via de novo pathway; orotate from (S)-dihydroorotate (quinone route): step 1/1. In terms of biological role, catalyzes the conversion of dihydroorotate to orotate with quinone as electron acceptor. The chain is Dihydroorotate dehydrogenase (quinone) from Nitrosomonas europaea (strain ATCC 19718 / CIP 103999 / KCTC 2705 / NBRC 14298).